The primary structure comprises 285 residues: 4-hydroxybenzoate octaprenyltransferase (285 aa).

A run of 8 helical transmembrane segments spans residues 28–48 (LWAL…CIFF), 86–106 (IAAW…FALI), 110–130 (NSLT…YPFF), 133–153 (FFAI…PMAF), 160–180 (VPLV…AYDT), 207–227 (VAAI…AGVM), 232–252 (WPYW…YTLI), and 262–284 (AAFR…AYAI).

The protein belongs to the UbiA prenyltransferase family. It depends on Mg(2+) as a cofactor.

Its subcellular location is the cell inner membrane. It catalyses the reaction all-trans-octaprenyl diphosphate + 4-hydroxybenzoate = 4-hydroxy-3-(all-trans-octaprenyl)benzoate + diphosphate. It functions in the pathway cofactor biosynthesis; ubiquinone biosynthesis. Functionally, catalyzes the prenylation of para-hydroxybenzoate (PHB) with an all-trans polyprenyl group. Mediates the second step in the final reaction sequence of ubiquinone-8 (UQ-8) biosynthesis, which is the condensation of the polyisoprenoid side chain with PHB, generating the first membrane-bound Q intermediate 3-octaprenyl-4-hydroxybenzoate. This is 4-hydroxybenzoate octaprenyltransferase from Cupriavidus pinatubonensis (strain JMP 134 / LMG 1197) (Cupriavidus necator (strain JMP 134)).